A 211-amino-acid polypeptide reads, in one-letter code: V-type ATP synthase subunit D (211 aa).

This sequence belongs to the V-ATPase D subunit family.

Its function is as follows. Produces ATP from ADP in the presence of a proton gradient across the membrane. This chain is V-type ATP synthase subunit D, found in Enterococcus faecalis (strain ATCC 700802 / V583).